A 993-amino-acid chain; its full sequence is ATP-dependent DNA helicase MPH1 (993 aa).

The 168-residue stretch at 94 to 261 (IVHKSLFQNT…EVVNNLDISK (168 aa)) folds into the Helicase ATP-binding domain. Residue 107–114 (IPTGMGKT) coordinates ATP. The DEAH box signature appears at 209-212 (DEAH). The Helicase C-terminal domain occupies 507–655 (KVERLHRQEQ…CIDYKKSDRI (149 aa)). The tract at residues 530 to 551 (NDKLERSARRTGSSEEAQISGM) is disordered. Positions 539–551 (RTGSSEEAQISGM) are enriched in polar residues.

This sequence belongs to the DEAD box helicase family. DEAH subfamily. FANCM sub-subfamily. As to quaternary structure, interacts with the MHF histone-fold complex to form the FANCM-MHF complex.

The protein resides in the nucleus. It catalyses the reaction ATP + H2O = ADP + phosphate + H(+). In terms of biological role, ATP-dependent DNA helicase involved in DNA damage repair by homologous recombination and in genome maintenance. Capable of unwinding D-loops. Plays a role in limiting crossover recombinants during mitotic DNA double-strand break (DSB) repair. Component of a FANCM-MHF complex which promotes gene conversion at blocked replication forks, probably by reversal of the stalled fork. In Saccharomyces cerevisiae (strain YJM789) (Baker's yeast), this protein is ATP-dependent DNA helicase MPH1.